A 312-amino-acid chain; its full sequence is Translation initiation factor IF3-2, chloroplastic (312 aa).

The N-terminal 55 residues, 1 to 55 (MAGITSSTVGFNAVFTGITKTVSSHSLFSVDSKLCSLRLSKTELSFTNLTPSPRR), are a transit peptide targeting the chloroplast. A compositionally biased stretch (basic and acidic residues) spans 253 to 263 (EMIRKPQEPPT). Positions 253-312 (EMIRKPQEPPTRKKKKTAENEASASAAEITAEPEPEPEPEPEPEPEPEPEPEPEPLQIDS) are disordered. The span at 272–282 (NEASASAAEIT) shows a compositional bias: low complexity. Acidic residues predominate over residues 283 to 305 (AEPEPEPEPEPEPEPEPEPEPEP).

Belongs to the IF-3 family. Monomer. In terms of tissue distribution, highly expressed in young, newly emerged leaves.

It is found in the plastid. The protein resides in the chloroplast. Chloroplast translation initiation factor that is essential for the coordination of leaf and chloroplast development. IF-3 binds to the 30S ribosomal subunit and shifts the equilibrium between 70S ribosomes and their 50S and 30S subunits in favor of the free subunits, thus enhancing the availability of 30S subunits on which protein synthesis initiation begins. This Arabidopsis thaliana (Mouse-ear cress) protein is Translation initiation factor IF3-2, chloroplastic.